Here is a 153-residue protein sequence, read N- to C-terminus: Large ribosomal subunit protein uL13 (153 aa).

The protein belongs to the universal ribosomal protein uL13 family. In terms of assembly, part of the 50S ribosomal subunit.

Its function is as follows. This protein is one of the early assembly proteins of the 50S ribosomal subunit, although it is not seen to bind rRNA by itself. It is important during the early stages of 50S assembly. The protein is Large ribosomal subunit protein uL13 of Methylobacterium sp. (strain 4-46).